We begin with the raw amino-acid sequence, 58 residues long: Sperm protamine P2 (58 aa).

A disordered region spans residues 1-58 (RRRRRRGKGRGKKRKGKGKKRGKGRRRGSKGRKKKKGKGKKRKRRRRRRRKGSKGKGK).

Gonads.

The protein localises to the nucleus. The protein resides in the chromosome. Its function is as follows. Protamines substitute for histones in the chromatin of sperm during the haploid phase of spermatogenesis. They compact sperm DNA into a highly condensed, stable and inactive complex. The polypeptide is Sperm protamine P2 (Bolinus brandaris (Purple dye murex)).